Consider the following 58-residue polypeptide: Large ribosomal subunit protein bL32 (58 aa).

Over residues 1-15 (MAVPKKKTSKAKRNQ) the composition is skewed to basic residues. Residues 1 to 23 (MAVPKKKTSKAKRNQRSATWKGK) form a disordered region.

Belongs to the bacterial ribosomal protein bL32 family.

This is Large ribosomal subunit protein bL32 from Synechococcus sp. (strain CC9902).